Here is a 309-residue protein sequence, read N- to C-terminus: Protein FdhE homolog (309 aa).

Belongs to the FdhE family.

It localises to the cytoplasm. Necessary for formate dehydrogenase activity. The protein is Protein FdhE homolog of Enterobacter sp. (strain 638).